A 790-amino-acid polypeptide reads, in one-letter code: Vacuolar protein sorting-associated protein 35B (790 aa).

The protein belongs to the VPS35 family. As to quaternary structure, component of the retromer complex which consists of VPS29 (MAG1), VPS26 (VPS26A or VPS26B), VPS35 (VPS35A or VPS35B or VPS35C), VPS5/17 (SNX1 or SNX2A or SNX2B). Component of a retromer subcomplex consisting of VPS29 (MAG1), VPS26 (VPS26A or VPS26B), VPS35 (VPS35A or VPS35B or VPS35C). In terms of tissue distribution, expressed in siliques and maturing seeds (at protein level).

Its subcellular location is the cytoplasm. The protein resides in the endosome membrane. It localises to the prevacuolar compartment membrane. The protein localises to the golgi apparatus. It is found in the trans-Golgi network membrane. Plays a role in vesicular protein sorting. Component of the membrane-associated retromer complex which is essential in endosome-to-Golgi retrograde transport. Also involved in the efficient sorting of seed storage proteins globulin 12S and albumin 2S. The VPS29-VPS26-VPS35 subcomplex may be involved in recycling of specific cargos from endosome to the plasma membrane. This is Vacuolar protein sorting-associated protein 35B (VPS35B) from Arabidopsis thaliana (Mouse-ear cress).